The sequence spans 714 residues: Solute carrier family 12 member 8 (714 aa).

A run of 6 helical transmembrane segments spans residues 37-60, 72-93, 99-116, 123-142, 154-173, and 185-205; these read VLFG…VLFL, LLGM…LSGI, SSIG…VLGG, GLLY…TGFA, IWAV…GINL, and LLLF…FTHL. N-linked (GlcNAc...) asparagine glycosylation occurs at Asn-221. The next 5 membrane-spanning stretches (helical) occupy residues 233 to 254, 266 to 289, 309 to 331, 360 to 377, and 383 to 403; these read FFTV…FNMG, LGSL…LGAI, GFLF…LYGA, PVAA…FVFV, and LAPI…YSYF. 2 disordered regions span residues 471 to 503 and 530 to 550; these read KLES…TLQD and GQES…PEGT. Polar residues predominate over residues 533 to 548; sequence SCWNKQTSKSEGTQPE. Transmembrane regions (helical) follow at residues 593-616 and 622-643; these read CNPW…QWVY and GVAA…LGSA.

It belongs to the SLC12A transporter family. Ubiquitous with very low level in normal skin.

The protein resides in the membrane. Its function is as follows. Cation/chloride cotransporter that may play a role in the control of keratinocyte proliferation. In Homo sapiens (Human), this protein is Solute carrier family 12 member 8 (SLC12A8).